The sequence spans 87 residues: Virulence protein PagD (87 aa).

Residues 1–20 (MKHHAFMLWSLLIFSFHVLA) form the signal peptide. The segment at 46-87 (QPPTNTDKKQARQISSPSCPTTKPMMSAPVNDARKGNTFSRT) is disordered. Residues 57–66 (RQISSPSCPT) show a composition bias toward polar residues.

Putative function in virulence. Could be involved in promoting S.typhimurium survival within macrophages. This chain is Virulence protein PagD (pagD), found in Salmonella typhimurium (strain LT2 / SGSC1412 / ATCC 700720).